The following is a 131-amino-acid chain: Large ribosomal subunit protein bL17 (131 aa).

This sequence belongs to the bacterial ribosomal protein bL17 family. In terms of assembly, part of the 50S ribosomal subunit. Contacts protein L32.

This is Large ribosomal subunit protein bL17 from Methylobacillus flagellatus (strain ATCC 51484 / DSM 6875 / VKM B-1610 / KT).